Consider the following 341-residue polypeptide: N-acetyl-gamma-glutamyl-phosphate reductase (341 aa).

Cys-163 is an active-site residue.

Belongs to the NAGSA dehydrogenase family. Type 1 subfamily.

Its subcellular location is the cytoplasm. The catalysed reaction is N-acetyl-L-glutamate 5-semialdehyde + phosphate + NADP(+) = N-acetyl-L-glutamyl 5-phosphate + NADPH + H(+). It functions in the pathway amino-acid biosynthesis; L-arginine biosynthesis; N(2)-acetyl-L-ornithine from L-glutamate: step 3/4. Catalyzes the NADPH-dependent reduction of N-acetyl-5-glutamyl phosphate to yield N-acetyl-L-glutamate 5-semialdehyde. In Idiomarina loihiensis (strain ATCC BAA-735 / DSM 15497 / L2-TR), this protein is N-acetyl-gamma-glutamyl-phosphate reductase.